Consider the following 424-residue polypeptide: ATP-sensitive inward rectifier potassium channel 8 (424 aa).

The Cytoplasmic portion of the chain corresponds to 1 to 69; that stretch reads MLARKSIIPE…IFTTLVDLKW (69 aa). A Phosphoserine modification is found at Ser6. Residues 70 to 94 traverse the membrane as a helical segment; the sequence is RHTLVIFTMSFLCSWLLFAIMWWLV. Residues 95–126 lie on the Extracellular side of the membrane; that stretch reads AFAHGDIYAYMEKGTMEKSGLESAVCVTNVRS. The segment at residues 127 to 138 is an intramembrane region (helical; Pore-forming); it reads FTSAFLFSIEVQ. Residues 139 to 145 constitute an intramembrane region (pore-forming); the sequence is VTIGFGG. Residues 140-145 carry the Selectivity filter motif; that stretch reads TIGFGG. The Extracellular segment spans residues 146-154; sequence RMMTEECPL. Residues 155–176 form a helical membrane-spanning segment; the sequence is AITVLILQNIVGLIINAVMLGC. The Cytoplasmic portion of the chain corresponds to 177 to 424; the sequence is IFMKTAQAHR…PEGNQCPSES (248 aa). The tract at residues 373–409 is disordered; sequence ELSHQNSLRKRNSMRRNNSMRRNNSIRRNNSSLMVPK. Low complexity predominate over residues 387-404; that stretch reads RRNNSMRRNNSIRRNNSS.

This sequence belongs to the inward rectifier-type potassium channel (TC 1.A.2.1) family. KCNJ8 subfamily. Interacts with ABCC9.

Its subcellular location is the membrane. It catalyses the reaction K(+)(in) = K(+)(out). Its function is as follows. Inward rectifier potassium channels are characterized by a greater tendency to allow potassium to flow into the cell rather than out of it. Their voltage dependence is regulated by the concentration of extracellular potassium; as external potassium is raised, the voltage range of the channel opening shifts to more positive voltages. The inward rectification is mainly due to the blockage of outward current by internal magnesium. This channel is activated by internal ATP and can be blocked by external barium. Can form a sulfonylurea-sensitive but ATP-insensitive potassium channel with ABCC9. This chain is ATP-sensitive inward rectifier potassium channel 8 (Kcnj8), found in Mus musculus (Mouse).